Reading from the N-terminus, the 473-residue chain is Fumarate hydratase class II 2 (473 aa).

A disordered region spans residues 1 to 28; that stretch reads MAKSARTKTARPATRTETDSFGPIEVPS. Residues 108–110, 139–142, 149–151, and Thr197 each bind substrate; these read SGT, HPND, and SSN. His198 (proton donor/acceptor) is an active-site residue. The active site involves Ser328. Substrate is bound by residues Ser329 and 334 to 336; that span reads KVN.

The protein belongs to the class-II fumarase/aspartase family. Fumarase subfamily. In terms of assembly, homotetramer.

The protein localises to the cytoplasm. It catalyses the reaction (S)-malate = fumarate + H2O. It participates in carbohydrate metabolism; tricarboxylic acid cycle; (S)-malate from fumarate: step 1/1. Functionally, involved in the TCA cycle. Catalyzes the stereospecific interconversion of fumarate to L-malate. The sequence is that of Fumarate hydratase class II 2 from Bradyrhizobium diazoefficiens (strain JCM 10833 / BCRC 13528 / IAM 13628 / NBRC 14792 / USDA 110).